Reading from the N-terminus, the 1363-residue chain is Vascular endothelial growth factor receptor 3 (1363 aa).

An N-terminal signal peptide occupies residues Met1–Gly24. Residues Tyr25–Glu775 are Extracellular-facing. 7 Ig-like C2-type domains span residues Pro30–Ser127, Lys151–Gln213, Pro219–Ile326, Pro331–Glu415, Pro422–Thr552, Pro555–Ser671, and Pro678–Ala764. N-linked (GlcNAc...) asparagine glycosylation is found at Asn33, Asn104, Asn166, Asn251, Asn299, and Asn411. Disulfide bonds link Cys51-Cys111 and Cys158-Cys206. Cys252 and Cys310 are oxidised to a cystine. 3 disulfides stabilise this stretch: Cys445/Cys534, Cys466/Cys486, and Cys578/Cys653. 5 N-linked (GlcNAc...) asparagine glycosylation sites follow: Asn515, Asn527, Asn594, Asn683, and Asn690. A disulfide bond links Cys699 and Cys751. An N-linked (GlcNAc...) asparagine glycan is attached at Asn758. The chain crosses the membrane as a helical span at residues Ile776–Ile796. The Cytoplasmic segment spans residues Phe797–Tyr1363. A phosphotyrosine; by SRC mark is found at Tyr830, Tyr833, and Tyr853. A Protein kinase domain is found at Leu845 to Leu1173. ATP is bound by residues Leu851–Val859 and Lys879. The Proton acceptor role is filled by Asp1037. Tyr1063 carries the phosphotyrosine; by autocatalysis and SRC modification. A phosphotyrosine; by autocatalysis mark is found at Tyr1068, Tyr1230, Tyr1231, and Tyr1265. Positions His1291 to Val1331 are disordered. Phosphotyrosine; by autocatalysis and SRC occurs at positions 1333 and 1337. Tyr1363 is subject to Phosphotyrosine; by autocatalysis.

This sequence belongs to the protein kinase superfamily. Tyr protein kinase family. CSF-1/PDGF receptor subfamily. As to quaternary structure, interacts with VEGFC and VEGFD. Monomer in the absence of bound VEGFC or VEGFD. Homodimer in the presence of bound VEGFC or VEGFD. Can also form a heterodimer with KDR. Interacts with PTPN14; the interaction is enhanced by stimulation with VEGFC. Interacts with CRK, GRB2, PTK2/FAK1, SHC1, PIK3R1 and PTPN11/SHP-2. Identified in a complex with SRC and ITGB1. In terms of processing, autophosphorylated on tyrosine residues upon ligand binding. Autophosphorylation occurs in trans, i.e. one subunit of the dimeric receptor phosphorylates tyrosine residues on the other subunit. Phosphorylation in response to H(2)O(2) is mediated by a process that requires SRC and PRKCD activity. Phosphorylation at Tyr-1068 is required for autophosphorylation at additional tyrosine residues. Phosphorylation at Tyr-1063 and Tyr-1337 is important for interaction with CRK and subsequent activation of MAPK8. Phosphorylation at Tyr-1230, Tyr-1231 and Tyr-1337 is important for interaction with GRB2 and subsequent activation of the AKT1 and MAPK1/ERK2 and/or MAPK3/ERK1 signaling pathways. In response to endothelial cell adhesion onto collagen, can also be phosphorylated in the absence of FLT4 kinase activity by SRC at Tyr-830, Tyr-833, Tyr-853, Tyr-1063, Tyr-1333, and Tyr-1337. In terms of tissue distribution, detected in endothelial cells (at protein level). Widely expressed. Detected in fetal spleen, lung and brain. Detected in adult liver, muscle, thymus, placenta, lung, testis, ovary, prostate, heart, and kidney.

The protein resides in the cell membrane. It is found in the cytoplasm. Its subcellular location is the nucleus. The protein localises to the secreted. The enzyme catalyses L-tyrosyl-[protein] + ATP = O-phospho-L-tyrosyl-[protein] + ADP + H(+). Its activity is regulated as follows. Present in an inactive conformation in the absence of bound ligand. Binding of VEGFC or VEGFD leads to dimerization and activation by autophosphorylation on tyrosine residues. Inhibited by MAZ51. Tyrosine-protein kinase that acts as a cell-surface receptor for VEGFC and VEGFD, and plays an essential role in adult lymphangiogenesis and in the development of the vascular network and the cardiovascular system during embryonic development. Promotes proliferation, survival and migration of endothelial cells, and regulates angiogenic sprouting. Signaling by activated FLT4 leads to enhanced production of VEGFC, and to a lesser degree VEGFA, thereby creating a positive feedback loop that enhances FLT4 signaling. Modulates KDR signaling by forming heterodimers. The secreted isoform 3 may function as a decoy receptor for VEGFC and/or VEGFD and play an important role as a negative regulator of VEGFC-mediated lymphangiogenesis and angiogenesis. Binding of vascular growth factors to isoform 1 or isoform 2 leads to the activation of several signaling cascades; isoform 2 seems to be less efficient in signal transduction, because it has a truncated C-terminus and therefore lacks several phosphorylation sites. Mediates activation of the MAPK1/ERK2, MAPK3/ERK1 signaling pathway, of MAPK8 and the JUN signaling pathway, and of the AKT1 signaling pathway. Phosphorylates SHC1. Mediates phosphorylation of PIK3R1, the regulatory subunit of phosphatidylinositol 3-kinase. Promotes phosphorylation of MAPK8 at 'Thr-183' and 'Tyr-185', and of AKT1 at 'Ser-473'. This Homo sapiens (Human) protein is Vascular endothelial growth factor receptor 3 (FLT4).